Consider the following 333-residue polypeptide: Ketol-acid reductoisomerase (NADP(+)) (333 aa).

The 181-residue stretch at 2–182 (AELFYDDDAD…GGTRAGVIKT (181 aa)) folds into the KARI N-terminal Rossmann domain. Residues 25 to 28 (YGSQ), Ser51, Ser53, and 83 to 86 (DPIQ) contribute to the NADP(+) site. His108 is a catalytic residue. NADP(+) is bound at residue Gly134. Residues 183-328 (TFTEETETDL…RELRKLMSWV (146 aa)) form the KARI C-terminal knotted domain. Mg(2+) is bound by residues Asp191, Glu195, Glu227, and Glu231. Residue Ser252 participates in substrate binding.

Belongs to the ketol-acid reductoisomerase family. Mg(2+) serves as cofactor.

It catalyses the reaction (2R)-2,3-dihydroxy-3-methylbutanoate + NADP(+) = (2S)-2-acetolactate + NADPH + H(+). The enzyme catalyses (2R,3R)-2,3-dihydroxy-3-methylpentanoate + NADP(+) = (S)-2-ethyl-2-hydroxy-3-oxobutanoate + NADPH + H(+). Its pathway is amino-acid biosynthesis; L-isoleucine biosynthesis; L-isoleucine from 2-oxobutanoate: step 2/4. The protein operates within amino-acid biosynthesis; L-valine biosynthesis; L-valine from pyruvate: step 2/4. Its function is as follows. Involved in the biosynthesis of branched-chain amino acids (BCAA). Catalyzes an alkyl-migration followed by a ketol-acid reduction of (S)-2-acetolactate (S2AL) to yield (R)-2,3-dihydroxy-isovalerate. In the isomerase reaction, S2AL is rearranged via a Mg-dependent methyl migration to produce 3-hydroxy-3-methyl-2-ketobutyrate (HMKB). In the reductase reaction, this 2-ketoacid undergoes a metal-dependent reduction by NADPH to yield (R)-2,3-dihydroxy-isovalerate. This Streptomyces griseus subsp. griseus (strain JCM 4626 / CBS 651.72 / NBRC 13350 / KCC S-0626 / ISP 5235) protein is Ketol-acid reductoisomerase (NADP(+)).